The primary structure comprises 282 residues: Elongation factor Ts (282 aa).

Residues 79–82 (TDFV) form an involved in Mg(2+) ion dislocation from EF-Tu region.

This sequence belongs to the EF-Ts family.

It localises to the cytoplasm. Associates with the EF-Tu.GDP complex and induces the exchange of GDP to GTP. It remains bound to the aminoacyl-tRNA.EF-Tu.GTP complex up to the GTP hydrolysis stage on the ribosome. The polypeptide is Elongation factor Ts (Shewanella piezotolerans (strain WP3 / JCM 13877)).